The primary structure comprises 355 residues: MRVPRSQPWGLALLLLLLPGTLRAAESHRSLLYHFTAVSNPASGTPAFSLSGWLGPQQYLSYNNLRAQAEPYGAWVWESQVSWYWEKETTDLRDKEKLFLEALKVFGDRDSYTLQGLLGCELGPDNVSVPMAKYALNGEEFMEFDPKLGIWDGDWPEARTIGIKWMKHPEAVNKEKTFLLYSCPHRLLGHLERGRGNLEWKEPPSMRLKARPGNPGFSVLTCSAFSFYPPELQLRFLRNGLAAGSGEGDVVPNGDGSFYAWSSLTVKSGDEHQYRCWVQHVGPAQPLTVELESPAKSSVPVIGISIGFLLLMTVAAGGALLWRRRKGLPAPWIAFRGDDIGALLPTPGLSKDAES.

A signal peptide spans 1-24 (MRVPRSQPWGLALLLLLLPGTLRA). The interval 25-111 (AESHRSLLYH…ALKVFGDRDS (87 aa)) is alpha-1. Over 25-300 (AESHRSLLYH…LESPAKSSVP (276 aa)) the chain is Extracellular. Positions 112-201 (YTLQGLLGCE…ERGRGNLEWK (90 aa)) are alpha-2. N126 is a glycosylation site (N-linked (GlcNAc...) asparagine). Residues 202–291 (EPPSMRLKAR…GPAQPLTVEL (90 aa)) form an alpha-3 region. The region spanning 203 to 292 (PPSMRLKARP…PAQPLTVELE (90 aa)) is the Ig-like C1-type domain. C222 and C276 form a disulfide bridge. Residues 293–298 (SPAKSS) form a connecting peptide region. The helical transmembrane segment at 301-321 (VIGISIGFLLLMTVAAGGALL) threads the bilayer. The Cytoplasmic portion of the chain corresponds to 322 to 355 (WRRRKGLPAPWIAFRGDDIGALLPTPGLSKDAES).

The protein belongs to the immunoglobulin superfamily. In terms of assembly, fcRn complex consists of two subunits: p51, and p14 which is equivalent to beta-2-microglobulin. It forms an MHC class I-like heterodimer. Interacts with albumin/ALB; this interaction regulates ALB homeostasis. In terms of tissue distribution, expressed in liver and mammary gland of non-lactating animals. Expressed in hepatocytes and in epithelial cells of portal bile ductuli. Not expressed in the brances of portal veins or hepatic arteries. Expressed in the epithelial cells of the acini and ducti in the mammary gland with expression emphasized at the apical side. Not expressed in blood vessels of mammary gland.

It is found in the cell membrane. The protein resides in the endosome membrane. Functionally, cell surface receptor that transfers passive humoral immunity from the mother to the newborn. Binds to the Fc region of monomeric immunoglobulin gamma and mediates its selective uptake from milk. IgG in the milk is bound at the apical surface of the intestinal epithelium. The resultant FcRn-IgG complexes are transcytosed across the intestinal epithelium and IgG is released from FcRn into blood or tissue fluids. Throughout life, contributes to effective humoral immunity by recycling IgG and extending its half-life in the circulation. Mechanistically, monomeric IgG binding to FcRn in acidic endosomes of endothelial and hematopoietic cells recycles IgG to the cell surface where it is released into the circulation. In addition of IgG, regulates homeostasis of the other most abundant circulating protein albumin/ALB. This Camelus dromedarius (Dromedary) protein is IgG receptor FcRn large subunit p51.